The sequence spans 429 residues: MSQITDVYAREILDSRGNPTLEVEVFLDSGVMGRAAVPSGASTGEREALELRDGDKGRYLGKGVEQAVSNVNDIIADEITGMDATDQVGIDKKMLELDGTEFKSRLGANAILGVSLAVAKAAAEEVGVPLYQYIGGCNAKELPLPMMNIINGGAHADNNVDIQEFMIMPAGAANFKEALRMGAEIFHALKSVLKGKGYNTAVGDEGGFAPNLKSNEEALEVIMEAIVKAGYKPGEEVLLALDVASSELFENGVYTLENEAESKKTADQLVDFYENLVNKYPIVSIEDGMAENDWDGWKKLTDRLGKRIQIVGDDLFVTNPSILKEGIKKGIANSILIKLNQIGTLTETLDAIEMAKRAGYTCVISHRSGETEDTTLADLAVAVNAGQIKTGSLCRTDRVCKYNQLLRIEDELDDVAQFRGHEVFYNIKK.

Glutamine 163 is a (2R)-2-phosphoglycerate binding site. Glutamate 205 serves as the catalytic Proton donor. Mg(2+)-binding residues include aspartate 242, glutamate 286, and aspartate 313. (2R)-2-phosphoglycerate contacts are provided by lysine 338, arginine 367, serine 368, and lysine 389. Lysine 338 serves as the catalytic Proton acceptor.

This sequence belongs to the enolase family. Requires Mg(2+) as cofactor.

It localises to the cytoplasm. The protein resides in the secreted. It is found in the cell surface. It catalyses the reaction (2R)-2-phosphoglycerate = phosphoenolpyruvate + H2O. The protein operates within carbohydrate degradation; glycolysis; pyruvate from D-glyceraldehyde 3-phosphate: step 4/5. In terms of biological role, catalyzes the reversible conversion of 2-phosphoglycerate (2-PG) into phosphoenolpyruvate (PEP). It is essential for the degradation of carbohydrates via glycolysis. The polypeptide is Enolase (Citrifermentans bemidjiense (strain ATCC BAA-1014 / DSM 16622 / JCM 12645 / Bem) (Geobacter bemidjiensis)).